A 128-amino-acid polypeptide reads, in one-letter code: C-C motif chemokine 28 (128 aa).

An N-terminal signal peptide occupies residues 1–24; that stretch reads MQQTGLTLALVALAVCVALPSSEA. 2 disulfide bridges follow: Cys32–Cys60 and Cys33–Cys75. Positions 89–128 are disordered; the sequence is EQAAKKNTKGNICHKKQAGKRKSKGAHQEKPEIHSHKSPY. Residues 94–113 show a composition bias toward basic residues; that stretch reads KNTKGNICHKKQAGKRKSKG. Residues 114–128 show a composition bias toward basic and acidic residues; sequence AHQEKPEIHSHKSPY.

Belongs to the intercrine beta (chemokine CC) family.

Its subcellular location is the secreted. Its function is as follows. Chemotactic activity for resting CD4, CD8 T-cells and eosinophils. Binds to CCR3 and CCR10 and induces calcium mobilization in a dose-dependent manner. The sequence is that of C-C motif chemokine 28 (CCL28) from Canis lupus familiaris (Dog).